The sequence spans 155 residues: MKVEIDSFSGAKIYPGRGTLFVRGDSKIFRFQSSKSASLFHQRKNPRRIAWTVLYRRHHKKGITEEVARKRTRKSVKAQRAVVGASLELIKERRSLKPEVRKAQRDEKKKADKEKKKADKAARKSEKAKLAAAQGSKVSKQQAKGAFQKVAATSR.

The span at 94–129 shows a compositional bias: basic and acidic residues; sequence RSLKPEVRKAQRDEKKKADKEKKKADKAARKSEKAK. The disordered stretch occupies residues 94-155; sequence RSLKPEVRKA…AFQKVAATSR (62 aa).

It belongs to the eukaryotic ribosomal protein eL24 family.

The sequence is that of Large ribosomal subunit protein eL24 (RPL24) from Kluyveromyces lactis (strain ATCC 8585 / CBS 2359 / DSM 70799 / NBRC 1267 / NRRL Y-1140 / WM37) (Yeast).